Reading from the N-terminus, the 38-residue chain is Large ribosomal subunit protein bL36 (38 aa).

Belongs to the bacterial ribosomal protein bL36 family.

The polypeptide is Large ribosomal subunit protein bL36 (Chloroherpeton thalassium (strain ATCC 35110 / GB-78)).